We begin with the raw amino-acid sequence, 776 residues long: Probable E3 ubiquitin-protein ligase HECTD2 (776 aa).

The tract at residues 1-46 (MSEAVRVPSPATPLVVAAAAPEERKGKESEREKLPPIVSAGAGATA) is disordered. Low complexity predominate over residues 7-20 (VPSPATPLVVAAAA). Residue Ser9 is modified to Phosphoserine. Residues 21-34 (PEERKGKESEREKL) are compositionally biased toward basic and acidic residues. In terms of domain architecture, HECT spans 437-776 (KRADLKKKLK…ISNSEGFGLE (340 aa)). The active-site Glycyl thioester intermediate is Cys744.

The enzyme catalyses S-ubiquitinyl-[E2 ubiquitin-conjugating enzyme]-L-cysteine + [acceptor protein]-L-lysine = [E2 ubiquitin-conjugating enzyme]-L-cysteine + N(6)-ubiquitinyl-[acceptor protein]-L-lysine.. Its pathway is protein modification; protein ubiquitination. Functionally, E3 ubiquitin-protein ligase which accepts ubiquitin from an E2 ubiquitin-conjugating enzyme in the form of a thioester and then directly transfers the ubiquitin to targeted substrates. In Pongo abelii (Sumatran orangutan), this protein is Probable E3 ubiquitin-protein ligase HECTD2 (HECTD2).